The primary structure comprises 327 residues: Undecaprenyl-phosphate 4-deoxy-4-formamido-L-arabinose transferase (327 aa).

Transmembrane regions (helical) follow at residues 236–256 (LSIF…LLVV) and 270–290 (VFML…GMGL).

The protein belongs to the glycosyltransferase 2 family.

The protein resides in the cell inner membrane. It carries out the reaction UDP-4-deoxy-4-formamido-beta-L-arabinose + di-trans,octa-cis-undecaprenyl phosphate = 4-deoxy-4-formamido-alpha-L-arabinopyranosyl di-trans,octa-cis-undecaprenyl phosphate + UDP. It functions in the pathway glycolipid biosynthesis; 4-amino-4-deoxy-alpha-L-arabinose undecaprenyl phosphate biosynthesis; 4-amino-4-deoxy-alpha-L-arabinose undecaprenyl phosphate from UDP-4-deoxy-4-formamido-beta-L-arabinose and undecaprenyl phosphate: step 1/2. It participates in bacterial outer membrane biogenesis; lipopolysaccharide biosynthesis. Its function is as follows. Catalyzes the transfer of 4-deoxy-4-formamido-L-arabinose from UDP to undecaprenyl phosphate. The modified arabinose is attached to lipid A and is required for resistance to polymyxin and cationic antimicrobial peptides. The sequence is that of Undecaprenyl-phosphate 4-deoxy-4-formamido-L-arabinose transferase from Klebsiella pneumoniae subsp. pneumoniae (strain ATCC 700721 / MGH 78578).